Reading from the N-terminus, the 120-residue chain is UPF0231 protein YacL (120 aa).

It belongs to the UPF0231 family.

This chain is UPF0231 protein YacL, found in Escherichia coli O6:K15:H31 (strain 536 / UPEC).